The chain runs to 37 residues: Cytochrome b6-f complex subunit 5 (37 aa).

Residues 5–25 (LLSGIVLGMIPITLAGLFVTA) form a helical membrane-spanning segment.

The protein belongs to the PetG family. As to quaternary structure, the 4 large subunits of the cytochrome b6-f complex are cytochrome b6, subunit IV (17 kDa polypeptide, PetD), cytochrome f and the Rieske protein, while the 4 small subunits are PetG, PetL, PetM and PetN. The complex functions as a dimer.

The protein localises to the plastid. It is found in the chloroplast thylakoid membrane. Functionally, component of the cytochrome b6-f complex, which mediates electron transfer between photosystem II (PSII) and photosystem I (PSI), cyclic electron flow around PSI, and state transitions. PetG is required for either the stability or assembly of the cytochrome b6-f complex. This chain is Cytochrome b6-f complex subunit 5, found in Mesostigma viride (Green alga).